The primary structure comprises 340 residues: Selenide, water dikinase (340 aa).

The active site involves cysteine 13. ATP is bound by residues lysine 16 and 43-45 (ASD). Aspartate 46 is a Mg(2+) binding site. ATP contacts are provided by residues aspartate 63, aspartate 86, and 133-135 (GHS). Aspartate 86 lines the Mg(2+) pocket. Aspartate 221 is a Mg(2+) binding site.

It belongs to the selenophosphate synthase 1 family. Class I subfamily. In terms of assembly, homodimer. Mg(2+) serves as cofactor.

It carries out the reaction hydrogenselenide + ATP + H2O = selenophosphate + AMP + phosphate + 2 H(+). Synthesizes selenophosphate from selenide and ATP. This Desulfitobacterium hafniense (strain DSM 10664 / DCB-2) protein is Selenide, water dikinase.